Consider the following 278-residue polypeptide: Ribosomal RNA small subunit methyltransferase J (278 aa).

Residues Glu-143–Arg-144 and Asp-197 each bind S-adenosyl-L-methionine.

This sequence belongs to the methyltransferase superfamily. RsmJ family.

Its subcellular location is the cytoplasm. The catalysed reaction is guanosine(1516) in 16S rRNA + S-adenosyl-L-methionine = N(2)-methylguanosine(1516) in 16S rRNA + S-adenosyl-L-homocysteine + H(+). Its function is as follows. Specifically methylates the guanosine in position 1516 of 16S rRNA. The sequence is that of Ribosomal RNA small subunit methyltransferase J from Marinobacter nauticus (strain ATCC 700491 / DSM 11845 / VT8) (Marinobacter aquaeolei).